The following is a 114-amino-acid chain: Fumarate reductase subunit D (114 aa).

3 helical membrane-spanning segments follow: residues 27–47 (ICFP…LIPM), 50–70 (IIVF…TIFP), and 94–114 (WLFY…VIAL).

It belongs to the FrdD family. In terms of assembly, part of an enzyme complex containing four subunits: a flavoprotein (FrdA), an iron-sulfur protein (FrdB), and two hydrophobic anchor proteins (FrdC and FrdD).

Its subcellular location is the cell inner membrane. Functionally, anchors the catalytic components of the fumarate reductase complex to the cell membrane, binds quinones. This is Fumarate reductase subunit D from Haemophilus ducreyi (strain 35000HP / ATCC 700724).